A 185-amino-acid chain; its full sequence is Ribosome-recycling factor (185 aa).

Belongs to the RRF family.

The protein localises to the cytoplasm. Responsible for the release of ribosomes from messenger RNA at the termination of protein biosynthesis. May increase the efficiency of translation by recycling ribosomes from one round of translation to another. This is Ribosome-recycling factor from Coxiella burnetii (strain RSA 493 / Nine Mile phase I).